Here is a 472-residue protein sequence, read N- to C-terminus: 3-isopropylmalate dehydratase large subunit (472 aa).

[4Fe-4S] cluster contacts are provided by Cys350, Cys411, and Cys414.

This sequence belongs to the aconitase/IPM isomerase family. LeuC type 1 subfamily. Heterodimer of LeuC and LeuD. [4Fe-4S] cluster serves as cofactor.

It catalyses the reaction (2R,3S)-3-isopropylmalate = (2S)-2-isopropylmalate. It functions in the pathway amino-acid biosynthesis; L-leucine biosynthesis; L-leucine from 3-methyl-2-oxobutanoate: step 2/4. In terms of biological role, catalyzes the isomerization between 2-isopropylmalate and 3-isopropylmalate, via the formation of 2-isopropylmaleate. The polypeptide is 3-isopropylmalate dehydratase large subunit (Alcanivorax borkumensis (strain ATCC 700651 / DSM 11573 / NCIMB 13689 / SK2)).